Here is a 101-residue protein sequence, read N- to C-terminus: Urease subunit beta (101 aa).

This sequence belongs to the urease beta subunit family. In terms of assembly, heterotrimer of UreA (gamma), UreB (beta) and UreC (alpha) subunits. Three heterotrimers associate to form the active enzyme.

The protein resides in the cytoplasm. The catalysed reaction is urea + 2 H2O + H(+) = hydrogencarbonate + 2 NH4(+). It functions in the pathway nitrogen metabolism; urea degradation; CO(2) and NH(3) from urea (urease route): step 1/1. In Cereibacter sphaeroides (strain ATCC 17029 / ATH 2.4.9) (Rhodobacter sphaeroides), this protein is Urease subunit beta.